The sequence spans 656 residues: Chaperone protein HtpG (656 aa).

The tract at residues 1-359 is a; substrate-binding; it reads MSAQVEQLEF…AEDMSLNVSR (359 aa). The b stretch occupies residues 360–575; sequence EILQQNRQIN…AFGITPALAR (216 aa). The tract at residues 576-656 is c; it reads IYRASGQDVP…LLADLLSRSM (81 aa).

It belongs to the heat shock protein 90 family. As to quaternary structure, homodimer.

Its subcellular location is the cytoplasm. Functionally, molecular chaperone. Has ATPase activity. This is Chaperone protein HtpG from Mycobacterium leprae (strain TN).